A 644-amino-acid chain; its full sequence is DNA mismatch repair protein MutL (644 aa).

Belongs to the DNA mismatch repair MutL/HexB family.

This protein is involved in the repair of mismatches in DNA. It is required for dam-dependent methyl-directed DNA mismatch repair. May act as a 'molecular matchmaker', a protein that promotes the formation of a stable complex between two or more DNA-binding proteins in an ATP-dependent manner without itself being part of a final effector complex. The polypeptide is DNA mismatch repair protein MutL (Chlorobium chlorochromatii (strain CaD3)).